A 191-amino-acid polypeptide reads, in one-letter code: dTTP/UTP pyrophosphatase (191 aa).

The Proton acceptor role is filled by Asp-64.

The protein belongs to the Maf family. YhdE subfamily. The cofactor is a divalent metal cation.

Its subcellular location is the cytoplasm. It catalyses the reaction dTTP + H2O = dTMP + diphosphate + H(+). The enzyme catalyses UTP + H2O = UMP + diphosphate + H(+). In terms of biological role, nucleoside triphosphate pyrophosphatase that hydrolyzes dTTP and UTP. May have a dual role in cell division arrest and in preventing the incorporation of modified nucleotides into cellular nucleic acids. In Thermosipho africanus (strain TCF52B), this protein is dTTP/UTP pyrophosphatase.